We begin with the raw amino-acid sequence, 158 residues long: Transcription elongation factor GreA (158 aa).

The stretch at 47 to 74 (NSEYDEAKNEQAFTEGRIIQLENMLKNA) forms a coiled coil.

This sequence belongs to the GreA/GreB family.

Necessary for efficient RNA polymerase transcription elongation past template-encoded arresting sites. The arresting sites in DNA have the property of trapping a certain fraction of elongating RNA polymerases that pass through, resulting in locked ternary complexes. Cleavage of the nascent transcript by cleavage factors such as GreA or GreB allows the resumption of elongation from the new 3'terminus. GreA releases sequences of 2 to 3 nucleotides. The polypeptide is Transcription elongation factor GreA (Clostridium perfringens (strain ATCC 13124 / DSM 756 / JCM 1290 / NCIMB 6125 / NCTC 8237 / Type A)).